The following is a 420-amino-acid chain: E3 ubiquitin protein ligase DRIP2 (420 aa).

The RING-type zinc-finger motif lies at 20–61; that stretch reads CPLCDKLLRDATTISECLHTFCRKCIYEKITEDEIESCPVCD. Polar residues predominate over residues 113-123; that stretch reads ISSLVVSTPRV. Disordered regions lie at residues 113 to 201 and 226 to 289; these read ISSL…KDVD and DPKS…TFGD. Basic and acidic residues predominate over residues 154–165; that stretch reads KKEEEFGDDHVE. 2 stretches are compositionally biased toward polar residues: residues 166-194 and 232-242; these read SASSPETLKKFTQNKRQSSYANPNQSLSN and GNASHNDVQGS. The segment covering 244–253 has biased composition (basic residues); the sequence is TKTKDHKRKC. Polar residues predominate over residues 260 to 273; sequence SNNGDPTTSETATL. Residues 274-284 are compositionally biased toward basic residues; it reads KRTRRTRRKRS.

Interacts with DREB2A. In terms of processing, auto-ubiquitinated. As to expression, expressed in roots, leaves and flowers.

The enzyme catalyses S-ubiquitinyl-[E2 ubiquitin-conjugating enzyme]-L-cysteine + [acceptor protein]-L-lysine = [E2 ubiquitin-conjugating enzyme]-L-cysteine + N(6)-ubiquitinyl-[acceptor protein]-L-lysine.. It participates in protein modification; protein ubiquitination. Functionally, E3 ubiquitin-protein ligase that acts as a negative regulator of the response to water stress. Mediates ubiquitination and subsequent proteasomal degradation of the drought-induced transcriptional activator DREB2A. Functionally redundant with DRIP1. The sequence is that of E3 ubiquitin protein ligase DRIP2 (DRIP2) from Arabidopsis thaliana (Mouse-ear cress).